Here is an 83-residue protein sequence, read N- to C-terminus: Late seed maturation protein P8B6 (83 aa).

2 stretches are compositionally biased toward basic and acidic residues: residues 1-18 and 37-51; these read MASQ…KKGE and AEGR…KEQL. Residues 1–83 form a disordered region; that stretch reads MASQQEKKQL…DAEDEPSTRT (83 aa). Residues 73–83 are compositionally biased toward acidic residues; the sequence is EDAEDEPSTRT.

This sequence belongs to the small hydrophilic plant seed protein family.

It is found in the cytoplasm. In terms of biological role, this protein may play a role in equipping the seed for survival, maintaining a minimal level of hydration in the dry organism and preventing the denaturation of cytoplasmic components, or may play a role during imbibition by controlling water uptake. The polypeptide is Late seed maturation protein P8B6 (Raphanus sativus (Radish)).